We begin with the raw amino-acid sequence, 314 residues long: Protoheme IX farnesyltransferase (314 aa).

Transmembrane regions (helical) follow at residues 36 to 56 (IGIVNSNLITTIAGFLLAISF), 65 to 85 (WGTFLLTIIGTALVIAGGCIV), 114 to 134 (SVLTFGLLTTAVGLLLLMFTS), 135 to 155 (WYATLFAFIGWFGYVVLYTIW), 179 to 199 (WAAISPSFHIVPFVMFLIMFI), 237 to 257 (IIVYIACLLPLPFFLLPTMGI), 259 to 279 (FAVIATLLNLGWLAIAFTGLF), and 290 to 310 (IFIFSLNYLIILFPLMIIVKL).

This sequence belongs to the UbiA prenyltransferase family. Protoheme IX farnesyltransferase subfamily. In terms of assembly, interacts with CtaA.

The protein localises to the cell membrane. It catalyses the reaction heme b + (2E,6E)-farnesyl diphosphate + H2O = Fe(II)-heme o + diphosphate. It functions in the pathway porphyrin-containing compound metabolism; heme O biosynthesis; heme O from protoheme: step 1/1. Functionally, converts heme B (protoheme IX) to heme O by substitution of the vinyl group on carbon 2 of heme B porphyrin ring with a hydroxyethyl farnesyl side group. The chain is Protoheme IX farnesyltransferase from Oceanobacillus iheyensis (strain DSM 14371 / CIP 107618 / JCM 11309 / KCTC 3954 / HTE831).